A 1053-amino-acid chain; its full sequence is Probable sucrose-phosphate synthase (1053 aa).

Basic and acidic residues predominate over residues 103–115 (RRQERERGRREAV). 2 disordered regions span residues 103–127 (RRQE…EGEK) and 673–693 (LRSI…DSLR).

Belongs to the glycosyltransferase 1 family. In terms of assembly, homodimer or homotetramer.

It carries out the reaction beta-D-fructose 6-phosphate + UDP-alpha-D-glucose = sucrose 6(F)-phosphate + UDP + H(+). Its pathway is glycan biosynthesis; sucrose biosynthesis; sucrose from D-fructose 6-phosphate and UDP-alpha-D-glucose: step 1/2. Activity is regulated by phosphorylation and moderated by concentration of metabolites and light. Plays a role in photosynthetic sucrose synthesis by catalyzing the rate-limiting step of sucrose biosynthesis from UDP-glucose and fructose- 6-phosphate. Involved in the regulation of carbon partitioning in the leaves of plants. May regulate the synthesis of sucrose and therefore play a major role as a limiting factor in the export of photoassimilates out of the leaf. Plays a role for sucrose availability that is essential for plant growth and fiber elongation. The chain is Probable sucrose-phosphate synthase (SPS) from Solanum tuberosum (Potato).